A 321-amino-acid polypeptide reads, in one-letter code: Glutaminase (321 aa).

Residues serine 69, asparagine 120, glutamate 165, asparagine 172, tyrosine 196, tyrosine 248, and valine 266 each coordinate substrate.

Belongs to the glutaminase family. Homotetramer.

It carries out the reaction L-glutamine + H2O = L-glutamate + NH4(+). The sequence is that of Glutaminase from Parabacteroides distasonis (strain ATCC 8503 / DSM 20701 / CIP 104284 / JCM 5825 / NCTC 11152).